Here is a 98-residue protein sequence, read N- to C-terminus: Co-chaperonin GroES (98 aa).

The protein belongs to the GroES chaperonin family. Heptamer of 7 subunits arranged in a ring. Interacts with the chaperonin GroEL.

The protein localises to the cytoplasm. In terms of biological role, together with the chaperonin GroEL, plays an essential role in assisting protein folding. The GroEL-GroES system forms a nano-cage that allows encapsulation of the non-native substrate proteins and provides a physical environment optimized to promote and accelerate protein folding. GroES binds to the apical surface of the GroEL ring, thereby capping the opening of the GroEL channel. In Renibacterium salmoninarum (strain ATCC 33209 / DSM 20767 / JCM 11484 / NBRC 15589 / NCIMB 2235), this protein is Co-chaperonin GroES.